Here is a 177-residue protein sequence, read N- to C-terminus: Protein C (177 aa).

Polar residues predominate over residues 1–10; sequence MSTKAWNASR. The tract at residues 1–38 is disordered; sequence MSTKAWNASRLSGPDPSTPWSLRKPLQHGSRPPKGKRL.

The protein belongs to the morbillivirus protein C family.

This chain is Protein C (P/V/C), found in Rinderpest virus (strain RBOK) (RDV).